Consider the following 916-residue polypeptide: Transmembrane channel-like protein 2-A (916 aa).

Positions 1-13 (MPKKSDTTRKLED) are enriched in basic and acidic residues. Positions 1 to 159 (MPKKSDTTRK…DEEDESMSEG (159 aa)) are disordered. The Cytoplasmic portion of the chain corresponds to 1–271 (MPKKSDTTRK…IFLRWMYGMN (271 aa)). A compositionally biased stretch (acidic residues) spans 14–26 (VGIEIDGDVDSAE). 2 stretches are compositionally biased toward basic residues: residues 31-45 (SKGK…GKRG) and 62-72 (KGRRAANKKKP). Over residues 97-107 (NVRERGDGDKK) the composition is skewed to basic and acidic residues. A compositionally biased stretch (basic residues) spans 108–117 (KSGKKGRRGG). A compositionally biased stretch (basic and acidic residues) spans 118–138 (KKNEKGKGKDSDKDSDKDEKK). A compositionally biased stretch (acidic residues) spans 145–157 (DESDSDEEDESMS). A helical transmembrane segment spans residues 272–292 (LVLFSLTFGLVVIPEVLMGLP). Over 293–344 (YGSIPRKTVPREDQDTAMDYSVLTDFNGYCKYSVLFYGYYNNQRTIGFLKFR) the chain is Extracellular. Residues 345–365 (LPLSYLMVGIGTFGYSLMVVI) form a helical membrane-spanning segment. Residues 366-438 (RTMAKNADVG…ENIHLRRFLR (73 aa)) lie on the Cytoplasmic side of the membrane. Residues 439–459 (VLANFLITCTLGGSGYLIYFV) form a helical membrane-spanning segment. Residues 460–478 (VKRSQEFQNMDNLSWYEKN) are Extracellular-facing. A helical transmembrane segment spans residues 479–499 (ELEIIMSLLGLVGPMLFETIA). Residues 500–516 (ELEEYHPRIALKWQLGR) lie on the Cytoplasmic side of the membrane. A helical membrane pass occupies residues 517–537 (IFALFLGNLYTFLLALFDEVN). Residues 538-649 (AKLEEEESIK…EFDISGNVLG (112 aa)) lie on the Extracellular side of the membrane. Residues 650–670 (LVFNQGMIWMGAFYAPGLVGI) form a helical membrane-spanning segment. Residues 671–704 (NVLRLLSSMYYQCWAVMACNVPHERVFKASKSNN) lie on the Cytoplasmic side of the membrane. A helical membrane pass occupies residues 705 to 725 (FYMGLLLLILFLSLLPVVYTI). Topologically, residues 726-762 (MSLPPSFDCGPFSGKERMFDVVMETIDLDLPAFMGTL) are extracellular. A helical membrane pass occupies residues 763 to 783 (FGYVANPGLVISAVLLMVLAI). Residues 784 to 916 (YYLNSVSEAY…RGQGPPPRRQ (133 aa)) are Cytoplasmic-facing. The span at 804-818 (MQMARDEEKNRRNNK) shows a compositional bias: basic and acidic residues. The disordered stretch occupies residues 804 to 916 (MQMARDEEKN…RGQGPPPRRQ (113 aa)). Low complexity predominate over residues 883 to 892 (ARGPVTRAPG).

Belongs to the TMC family. As to quaternary structure, interacts (via N-terminus) with both isoforms CD1 and CD3 of PCDH15A (via cytoplasmic domain); this interaction is required for mechanotransduction of the hair cells and correct localization of PCDH15A in hair bundles of the hair cells. In terms of tissue distribution, in adults, expression is restricted to the hair cells of inner ear and lateral line organ. Expressed at higher levels in the larval inner ear than in the lateral-line neuromasts.

The protein localises to the cell membrane. It catalyses the reaction Ca(2+)(in) = Ca(2+)(out). Functionally, pore-forming subunit of the mechanotransducer (MET) non-selective cation channel complex located at tips of hair-cell stereocilia. Highly permeable to calcium and likely transports monovalent cations. The sequence is that of Transmembrane channel-like protein 2-A from Danio rerio (Zebrafish).